The following is a 296-amino-acid chain: Bifunctional protein FolD (296 aa).

NADP(+) contacts are provided by residues 166–168 (GRS), serine 195, and threonine 236.

The protein belongs to the tetrahydrofolate dehydrogenase/cyclohydrolase family. In terms of assembly, homodimer.

It catalyses the reaction (6R)-5,10-methylene-5,6,7,8-tetrahydrofolate + NADP(+) = (6R)-5,10-methenyltetrahydrofolate + NADPH. The catalysed reaction is (6R)-5,10-methenyltetrahydrofolate + H2O = (6R)-10-formyltetrahydrofolate + H(+). It functions in the pathway one-carbon metabolism; tetrahydrofolate interconversion. In terms of biological role, catalyzes the oxidation of 5,10-methylenetetrahydrofolate to 5,10-methenyltetrahydrofolate and then the hydrolysis of 5,10-methenyltetrahydrofolate to 10-formyltetrahydrofolate. The protein is Bifunctional protein FolD of Dehalococcoides mccartyi (strain CBDB1).